The chain runs to 320 residues: Ribosomal protein L11 methyltransferase (320 aa).

Threonine 165, glycine 186, aspartate 208, and asparagine 251 together coordinate S-adenosyl-L-methionine.

The protein belongs to the methyltransferase superfamily. PrmA family.

Its subcellular location is the cytoplasm. It catalyses the reaction L-lysyl-[protein] + 3 S-adenosyl-L-methionine = N(6),N(6),N(6)-trimethyl-L-lysyl-[protein] + 3 S-adenosyl-L-homocysteine + 3 H(+). Functionally, methylates ribosomal protein L11. In Limosilactobacillus fermentum (strain NBRC 3956 / LMG 18251) (Lactobacillus fermentum), this protein is Ribosomal protein L11 methyltransferase.